The following is a 250-amino-acid chain: UPF0259 membrane protein SG1383 (250 aa).

A run of 6 helical transmembrane segments spans residues 20 to 40 (FASI…LGHA), 86 to 106 (AGTL…LTMI), 121 to 141 (IGLS…TTLL), 146 to 166 (LLLI…APVI), 191 to 211 (LLAP…LLAT), and 219 to 239 (LVAV…LLIY).

Belongs to the UPF0259 family.

The protein resides in the cell inner membrane. In Sodalis glossinidius (strain morsitans), this protein is UPF0259 membrane protein SG1383.